We begin with the raw amino-acid sequence, 474 residues long: tRNA-2-methylthio-N(6)-dimethylallyladenosine synthase (474 aa).

Residues 3-120 (QKLHIKTWGC…LPEMINQIRG (118 aa)) enclose the MTTase N-terminal domain. [4Fe-4S] cluster contacts are provided by Cys12, Cys49, Cys83, Cys157, Cys161, and Cys164. The region spanning 143-375 (RAEGPTAFVS…QERINQQAAQ (233 aa)) is the Radical SAM core domain. The TRAM domain occupies 378–441 (RRMLGTEQRV…TNSLRGEVVR (64 aa)).

This sequence belongs to the methylthiotransferase family. MiaB subfamily. In terms of assembly, monomer. [4Fe-4S] cluster serves as cofactor.

The protein resides in the cytoplasm. It carries out the reaction N(6)-dimethylallyladenosine(37) in tRNA + (sulfur carrier)-SH + AH2 + 2 S-adenosyl-L-methionine = 2-methylsulfanyl-N(6)-dimethylallyladenosine(37) in tRNA + (sulfur carrier)-H + 5'-deoxyadenosine + L-methionine + A + S-adenosyl-L-homocysteine + 2 H(+). In terms of biological role, catalyzes the methylthiolation of N6-(dimethylallyl)adenosine (i(6)A), leading to the formation of 2-methylthio-N6-(dimethylallyl)adenosine (ms(2)i(6)A) at position 37 in tRNAs that read codons beginning with uridine. This is tRNA-2-methylthio-N(6)-dimethylallyladenosine synthase from Haemophilus influenzae (strain PittEE).